A 43-amino-acid chain; its full sequence is Large ribosomal subunit protein uL5 (43 aa).

The protein belongs to the universal ribosomal protein uL5 family. In terms of assembly, part of the 50S ribosomal subunit; part of the 5S rRNA/L5/L18/L25 subcomplex. Contacts the 5S rRNA and the P site tRNA. Forms a bridge to the 30S subunit in the 70S ribosome.

This is one of the proteins that bind and probably mediate the attachment of the 5S RNA into the large ribosomal subunit, where it forms part of the central protuberance. In the 70S ribosome it contacts protein S13 of the 30S subunit (bridge B1b), connecting the 2 subunits; this bridge is implicated in subunit movement. Contacts the P site tRNA; the 5S rRNA and some of its associated proteins might help stabilize positioning of ribosome-bound tRNAs. This chain is Large ribosomal subunit protein uL5 (rplE), found in Proteus vulgaris.